A 447-amino-acid chain; its full sequence is tRNA-2-methylthio-N(6)-dimethylallyladenosine synthase (447 aa).

In terms of domain architecture, MTTase N-terminal spans 3 to 120 (KKLYIETHGC…LPEMIDAART (118 aa)). Positions 12, 49, 83, 157, 161, and 164 each coordinate [4Fe-4S] cluster. The Radical SAM core domain maps to 143-375 (RVDGPSAFVS…QHRINQYGFE (233 aa)). The TRAM domain occupies 378–442 (RRMVGTVQRI…PHSLRGTLLD (65 aa)).

Belongs to the methylthiotransferase family. MiaB subfamily. Monomer. [4Fe-4S] cluster serves as cofactor.

The protein localises to the cytoplasm. The catalysed reaction is N(6)-dimethylallyladenosine(37) in tRNA + (sulfur carrier)-SH + AH2 + 2 S-adenosyl-L-methionine = 2-methylsulfanyl-N(6)-dimethylallyladenosine(37) in tRNA + (sulfur carrier)-H + 5'-deoxyadenosine + L-methionine + A + S-adenosyl-L-homocysteine + 2 H(+). Functionally, catalyzes the methylthiolation of N6-(dimethylallyl)adenosine (i(6)A), leading to the formation of 2-methylthio-N6-(dimethylallyl)adenosine (ms(2)i(6)A) at position 37 in tRNAs that read codons beginning with uridine. This Ectopseudomonas mendocina (strain ymp) (Pseudomonas mendocina) protein is tRNA-2-methylthio-N(6)-dimethylallyladenosine synthase.